We begin with the raw amino-acid sequence, 158 residues long: Transcription elongation factor GreA (158 aa).

Positions 45 to 72 (AEYHAAREQQSFIEGRIKQLEGELSHAE) form a coiled coil.

It belongs to the GreA/GreB family.

In terms of biological role, necessary for efficient RNA polymerase transcription elongation past template-encoded arresting sites. The arresting sites in DNA have the property of trapping a certain fraction of elongating RNA polymerases that pass through, resulting in locked ternary complexes. Cleavage of the nascent transcript by cleavage factors such as GreA or GreB allows the resumption of elongation from the new 3'terminus. GreA releases sequences of 2 to 3 nucleotides. The chain is Transcription elongation factor GreA from Xylella fastidiosa (strain 9a5c).